The chain runs to 127 residues: uncharacterized protein (127 aa).

Polar residues predominate over residues 1 to 17; the sequence is MQGSVQIQKGNISSSYT. The tract at residues 1–36 is disordered; sequence MQGSVQIQKGNISSSYTPEKHPSHPTSANGSMSPKR.

This is an uncharacterized protein from Treponema pallidum (strain Nichols).